A 155-amino-acid polypeptide reads, in one-letter code: SsrA-binding protein (155 aa).

Residues 135–147 show a composition bias toward basic and acidic residues; it reads TIKRRDQERDIKK. Residues 135–155 form a disordered region; the sequence is TIKRRDQERDIKKQMKHYNAR.

Belongs to the SmpB family.

The protein resides in the cytoplasm. Functionally, required for rescue of stalled ribosomes mediated by trans-translation. Binds to transfer-messenger RNA (tmRNA), required for stable association of tmRNA with ribosomes. tmRNA and SmpB together mimic tRNA shape, replacing the anticodon stem-loop with SmpB. tmRNA is encoded by the ssrA gene; the 2 termini fold to resemble tRNA(Ala) and it encodes a 'tag peptide', a short internal open reading frame. During trans-translation Ala-aminoacylated tmRNA acts like a tRNA, entering the A-site of stalled ribosomes, displacing the stalled mRNA. The ribosome then switches to translate the ORF on the tmRNA; the nascent peptide is terminated with the 'tag peptide' encoded by the tmRNA and targeted for degradation. The ribosome is freed to recommence translation, which seems to be the essential function of trans-translation. In Streptococcus pyogenes serotype M12 (strain MGAS2096), this protein is SsrA-binding protein.